The following is a 123-amino-acid chain: Small ribosomal subunit protein uS12 (123 aa).

This sequence belongs to the universal ribosomal protein uS12 family. As to quaternary structure, part of the 30S ribosomal subunit. Contacts proteins S8 and S17. May interact with IF1 in the 30S initiation complex.

Functionally, with S4 and S5 plays an important role in translational accuracy. Its function is as follows. Interacts with and stabilizes bases of the 16S rRNA that are involved in tRNA selection in the A site and with the mRNA backbone. Located at the interface of the 30S and 50S subunits, it traverses the body of the 30S subunit contacting proteins on the other side and probably holding the rRNA structure together. The combined cluster of proteins S8, S12 and S17 appears to hold together the shoulder and platform of the 30S subunit. This Corynebacterium diphtheriae (strain ATCC 700971 / NCTC 13129 / Biotype gravis) protein is Small ribosomal subunit protein uS12.